The sequence spans 92 residues: SPbeta prophage-derived uncharacterized protein YoqM (92 aa).

A signal peptide spans 1 to 25 (MKLRKVLTGSVLSLGLLVSASPAFA).

In Bacillus subtilis (strain 168), this protein is SPbeta prophage-derived uncharacterized protein YoqM (yoqM).